The following is a 67-amino-acid chain: uncharacterized protein (67 aa).

This is an uncharacterized protein from Saccharomyces cerevisiae (strain ATCC 204508 / S288c) (Baker's yeast).